A 316-amino-acid chain; its full sequence is Probable cell division protein WhiA (316 aa).

Positions 274–308 (SLKELGEMVSTGVISKSGVNHRLRKIDEIAEKLRN) form a DNA-binding region, H-T-H motif.

Belongs to the WhiA family.

Its function is as follows. Involved in cell division and chromosome segregation. The polypeptide is Probable cell division protein WhiA (Macrococcus caseolyticus (strain JCSC5402) (Macrococcoides caseolyticum)).